Here is a 380-residue protein sequence, read N- to C-terminus: Chaperone protein DnaJ (380 aa).

A J domain is found at 5 to 72 (DFYEVLGVAK…NKRAAYDQYG (68 aa)). The CR-type zinc finger occupies 140-218 (GKDAQIRIPS…CGGQGKVKRQ (79 aa)). Residues cysteine 153, cysteine 156, cysteine 170, cysteine 173, cysteine 192, cysteine 195, cysteine 206, and cysteine 209 each contribute to the Zn(2+) site. CXXCXGXG motif repeat units follow at residues 153–160 (CDTCHGSG), 170–177 (CTTCNGMG), 192–199 (CPHCRGTG), and 206–213 (CTSCGGQG). The disordered stretch occupies residues 359-380 (KGGAKHSPSGESWTDRLKSFFS). The segment covering 371–380 (WTDRLKSFFS) has biased composition (basic and acidic residues).

Belongs to the DnaJ family. In terms of assembly, homodimer. Zn(2+) is required as a cofactor.

The protein resides in the cytoplasm. Participates actively in the response to hyperosmotic and heat shock by preventing the aggregation of stress-denatured proteins and by disaggregating proteins, also in an autonomous, DnaK-independent fashion. Unfolded proteins bind initially to DnaJ; upon interaction with the DnaJ-bound protein, DnaK hydrolyzes its bound ATP, resulting in the formation of a stable complex. GrpE releases ADP from DnaK; ATP binding to DnaK triggers the release of the substrate protein, thus completing the reaction cycle. Several rounds of ATP-dependent interactions between DnaJ, DnaK and GrpE are required for fully efficient folding. Also involved, together with DnaK and GrpE, in the DNA replication of plasmids through activation of initiation proteins. The polypeptide is Chaperone protein DnaJ (Delftia acidovorans (strain DSM 14801 / SPH-1)).